A 500-amino-acid polypeptide reads, in one-letter code: 4-aminobutyrate aminotransferase, mitochondrial (500 aa).

The N-terminal 27 residues, 1-27 (MAFLLTTRRLVCSSQKNLHLFTPGSRY), are a transit peptide targeting the mitochondrion. Cys-163 contributes to the [2Fe-2S] cluster binding site. Residue 164–165 (GS) participates in pyridoxal 5'-phosphate binding. A [2Fe-2S] cluster-binding site is contributed by Cys-166. Arg-220 contributes to the substrate binding site. N6-succinyllysine is present on Lys-231. Lys-252 carries the N6-acetyllysine; alternate modification. Position 252 is an N6-succinyllysine; alternate (Lys-252). Residues Lys-279 and Lys-318 each carry the N6-acetyllysine modification. Lys-357 is modified (N6-(pyridoxal phosphate)lysine). A pyridoxal 5'-phosphate-binding site is contributed by Thr-381. Lys-413 is subject to N6-acetyllysine; alternate. Lys-413 is modified (N6-succinyllysine; alternate). An N6-acetyllysine mark is found at Lys-452 and Lys-470.

It belongs to the class-III pyridoxal-phosphate-dependent aminotransferase family. As to quaternary structure, homodimer; disulfide-linked. Pyridoxal 5'-phosphate is required as a cofactor. The cofactor is [2Fe-2S] cluster.

The protein resides in the mitochondrion matrix. The catalysed reaction is 4-aminobutanoate + 2-oxoglutarate = succinate semialdehyde + L-glutamate. It carries out the reaction (S)-3-amino-2-methylpropanoate + 2-oxoglutarate = 2-methyl-3-oxopropanoate + L-glutamate. In terms of biological role, catalyzes the conversion of gamma-aminobutyrate and L-beta-aminoisobutyrate to succinate semialdehyde and methylmalonate semialdehyde, respectively. Can also convert delta-aminovalerate and beta-alanine. The sequence is that of 4-aminobutyrate aminotransferase, mitochondrial from Rattus norvegicus (Rat).